Reading from the N-terminus, the 112-residue chain is Large ribosomal subunit protein uL22 (112 aa).

It belongs to the universal ribosomal protein uL22 family. In terms of assembly, part of the 50S ribosomal subunit.

This protein binds specifically to 23S rRNA; its binding is stimulated by other ribosomal proteins, e.g. L4, L17, and L20. It is important during the early stages of 50S assembly. It makes multiple contacts with different domains of the 23S rRNA in the assembled 50S subunit and ribosome. Its function is as follows. The globular domain of the protein is located near the polypeptide exit tunnel on the outside of the subunit, while an extended beta-hairpin is found that lines the wall of the exit tunnel in the center of the 70S ribosome. The polypeptide is Large ribosomal subunit protein uL22 (Desulfovibrio desulfuricans (strain ATCC 27774 / DSM 6949 / MB)).